A 234-amino-acid chain; its full sequence is Orotidine 5'-phosphate decarboxylase (234 aa).

Residues Asp-14, Lys-36, 63–72, Thr-118, Arg-179, Gln-188, Gly-208, and Arg-209 contribute to the substrate site; that span reads DMKLLDIDNT. The active-site Proton donor is the Lys-65.

The protein belongs to the OMP decarboxylase family. Type 1 subfamily. As to quaternary structure, homodimer.

The catalysed reaction is orotidine 5'-phosphate + H(+) = UMP + CO2. The protein operates within pyrimidine metabolism; UMP biosynthesis via de novo pathway; UMP from orotate: step 2/2. Functionally, catalyzes the decarboxylation of orotidine 5'-monophosphate (OMP) to uridine 5'-monophosphate (UMP). This is Orotidine 5'-phosphate decarboxylase from Rhizobium meliloti (strain 1021) (Ensifer meliloti).